The sequence spans 169 residues: MPCCGSLTRAPIGLCGRRTSWPRLGEPWSTASTSAPNGLTTAFAFGYNDLIAAMNNHYKDRHVLAAAVRERAEVIVTTNLKHFPDDALKPYQIKALHPDDFLLDQLDLYEEATKAVILGMVDAYIDPPFTPHSLLDALGEQVPQFAAKARRLFPSGSPFGLGVLLPFDQ.

In terms of biological role, toxic component of a type II toxin-antitoxin (TA) system. An RNase. The cognate antitoxin is VapB50. The sequence is that of Putative ribonuclease VapC50 from Mycobacterium tuberculosis (strain ATCC 25618 / H37Rv).